The primary structure comprises 153 residues: UPF0127 protein TGAM_1372 (153 aa).

The protein belongs to the UPF0127 family.

The sequence is that of UPF0127 protein TGAM_1372 from Thermococcus gammatolerans (strain DSM 15229 / JCM 11827 / EJ3).